The sequence spans 172 residues: uncharacterized protein (172 aa).

Residues 1 to 21 (MMKFKKCLLPVAMLASFTLAG) form the signal peptide. The N-palmitoyl cysteine moiety is linked to residue Cys-22. Residue Cys-22 is the site of S-diacylglycerol cysteine attachment.

The protein resides in the cell membrane. This is an uncharacterized protein from Escherichia coli O157:H7.